A 348-amino-acid chain; its full sequence is S-adenosylmethionine:tRNA ribosyltransferase-isomerase (348 aa).

It belongs to the QueA family. In terms of assembly, monomer.

It is found in the cytoplasm. The enzyme catalyses 7-aminomethyl-7-carbaguanosine(34) in tRNA + S-adenosyl-L-methionine = epoxyqueuosine(34) in tRNA + adenine + L-methionine + 2 H(+). Its pathway is tRNA modification; tRNA-queuosine biosynthesis. Transfers and isomerizes the ribose moiety from AdoMet to the 7-aminomethyl group of 7-deazaguanine (preQ1-tRNA) to give epoxyqueuosine (oQ-tRNA). This chain is S-adenosylmethionine:tRNA ribosyltransferase-isomerase, found in Tolumonas auensis (strain DSM 9187 / NBRC 110442 / TA 4).